The following is a 377-amino-acid chain: Succinyl-diaminopimelate desuccinylase (377 aa).

Position 68 (His-68) interacts with Zn(2+). Asp-70 is a catalytic residue. Asp-101 is a Zn(2+) binding site. Catalysis depends on Glu-135, which acts as the Proton acceptor. 3 residues coordinate Zn(2+): Glu-136, Glu-164, and His-350.

The protein belongs to the peptidase M20A family. DapE subfamily. Homodimer. Zn(2+) serves as cofactor. Co(2+) is required as a cofactor.

It carries out the reaction N-succinyl-(2S,6S)-2,6-diaminopimelate + H2O = (2S,6S)-2,6-diaminopimelate + succinate. It functions in the pathway amino-acid biosynthesis; L-lysine biosynthesis via DAP pathway; LL-2,6-diaminopimelate from (S)-tetrahydrodipicolinate (succinylase route): step 3/3. Its function is as follows. Catalyzes the hydrolysis of N-succinyl-L,L-diaminopimelic acid (SDAP), forming succinate and LL-2,6-diaminopimelate (DAP), an intermediate involved in the bacterial biosynthesis of lysine and meso-diaminopimelic acid, an essential component of bacterial cell walls. This chain is Succinyl-diaminopimelate desuccinylase, found in Acinetobacter baumannii (strain SDF).